Here is a 332-residue protein sequence, read N- to C-terminus: Glyceraldehyde-3-phosphate dehydrogenase 2 (332 aa).

Positions 11, 12, and 33 each coordinate NAD(+). Residues K46 and K63 each participate in a glycyl lysine isopeptide (Lys-Gly) (interchain with G-Cter in ubiquitin) cross-link. NAD(+) is bound at residue T120. D-glyceraldehyde 3-phosphate-binding positions include 149 to 151, T180, 209 to 210, and R232; these read SCT and TG. The active-site Nucleophile is the C150. S302 bears the Phosphoserine mark. Residues N314 and Y318 each coordinate NAD(+).

It belongs to the glyceraldehyde-3-phosphate dehydrogenase family. As to quaternary structure, homotetramer.

It localises to the cytoplasm. It catalyses the reaction D-glyceraldehyde 3-phosphate + phosphate + NAD(+) = (2R)-3-phospho-glyceroyl phosphate + NADH + H(+). The catalysed reaction is NADH + H2O = (6R)-NADHX. It carries out the reaction NADH + H2O = (6S)-NADHX. The enzyme catalyses NADPH + H2O = (6R)-NADPHX. It catalyses the reaction NADPH + H2O = (6S)-NADPHX. It functions in the pathway carbohydrate degradation; glycolysis; pyruvate from D-glyceraldehyde 3-phosphate: step 1/5. Glyceraldehyde-3-phosphate dehydrogenase (GAPDH) involved in glycolysis and gluconeogenesis. Catalyzes the reaction of glyceraldehyde-3-phosphate to 1,3 bis-phosphoglycerate. The contribution of the TDH1, TDH2, and TDH3 to the total glyceraldehyde-3-phosphate dehydrogenase activity is 10-15, 25-30, and 50-60%, respectively. In terms of biological role, as a side activity, catalyzes the hydration of the nicotinamide ring of NADH or NADPH at the C6 position to give the corresponding hydrates, NADHX and NADPHX, which exist as R and S epimers, that cannot act as electron donors or acceptors and inhibit several dehydrogenases, making them toxic. The protein is Glyceraldehyde-3-phosphate dehydrogenase 2 of Saccharomyces cerevisiae (strain ATCC 204508 / S288c) (Baker's yeast).